The chain runs to 115 residues: Chondroitin proteoglycan 8 (115 aa).

Residues 1 to 16 form the signal peptide; sequence MRPFILLALLVSVTVA. The tract at residues 33–96 is disordered; the sequence is VRRTTRDASD…GSGAAEVTSV (64 aa). Residues serine 61, serine 63, serine 84, serine 88, and serine 109 are each glycosylated (O-linked (Xyl...) (chondroitin sulfate) serine).

The protein is Chondroitin proteoglycan 8 of Caenorhabditis elegans.